Reading from the N-terminus, the 420-residue chain is Serine--tRNA ligase (420 aa).

229–231 (TAE) lines the L-serine pocket. 260–262 (RAE) contacts ATP. An L-serine-binding site is contributed by Glu283. 347-350 (EISS) serves as a coordination point for ATP. Ser382 is an L-serine binding site.

This sequence belongs to the class-II aminoacyl-tRNA synthetase family. Type-1 seryl-tRNA synthetase subfamily. In terms of assembly, homodimer. The tRNA molecule binds across the dimer.

Its subcellular location is the cytoplasm. The catalysed reaction is tRNA(Ser) + L-serine + ATP = L-seryl-tRNA(Ser) + AMP + diphosphate + H(+). It carries out the reaction tRNA(Sec) + L-serine + ATP = L-seryl-tRNA(Sec) + AMP + diphosphate + H(+). It functions in the pathway aminoacyl-tRNA biosynthesis; selenocysteinyl-tRNA(Sec) biosynthesis; L-seryl-tRNA(Sec) from L-serine and tRNA(Sec): step 1/1. In terms of biological role, catalyzes the attachment of serine to tRNA(Ser). Is also able to aminoacylate tRNA(Sec) with serine, to form the misacylated tRNA L-seryl-tRNA(Sec), which will be further converted into selenocysteinyl-tRNA(Sec). This Caldicellulosiruptor saccharolyticus (strain ATCC 43494 / DSM 8903 / Tp8T 6331) protein is Serine--tRNA ligase.